The chain runs to 255 residues: Anamorsin homolog (255 aa).

The N-terminal SAM-like domain stretch occupies residues 1-163 (MPKETLVVSK…VRPNWKSKTD (163 aa)). The segment at 164–185 (KKSPSMIDAAPIDGYISKAPDY) is linker. [2Fe-2S] cluster is bound by residues cysteine 188, cysteine 195, cysteine 198, and cysteine 200. The tract at residues 188–200 (CSTKPRACANCTC) is fe-S binding site A. [4Fe-4S] cluster contacts are provided by cysteine 224, cysteine 227, cysteine 235, and cysteine 238. 2 consecutive short sequence motifs (cx2C motif) follow at residues 224–227 (CGNC) and 235–238 (CESC). The segment at 224–238 (CGNCYLGDAFRCESC) is fe-S binding site B.

It belongs to the anamorsin family. In terms of assembly, monomer. [2Fe-2S] cluster is required as a cofactor. [4Fe-4S] cluster serves as cofactor.

It is found in the cytoplasm. The protein resides in the mitochondrion intermembrane space. Functionally, component of the cytosolic iron-sulfur (Fe-S) protein assembly (CIA) machinery. Required for the maturation of extramitochondrial Fe-S proteins. Part of an electron transfer chain functioning in an early step of cytosolic Fe-S biogenesis, facilitating the de novo assembly of a [4Fe-4S] cluster on the cytosolic Fe-S scaffold complex. Electrons are transferred from NADPH via a FAD- and FMN-containing diflavin oxidoreductase. Together with the diflavin oxidoreductase, also required for the assembly of the diferric tyrosyl radical cofactor of ribonucleotide reductase (RNR), probably by providing electrons for reduction during radical cofactor maturation in the catalytic small subunit. The protein is Anamorsin homolog of Theileria annulata.